The following is a 351-amino-acid chain: Beta-hexosaminidase (351 aa).

Substrate contacts are provided by residues D62, R70, R134, and 164–165 (KH). Residue H177 is the Proton donor/acceptor of the active site. The active-site Nucleophile is D249.

It belongs to the glycosyl hydrolase 3 family. NagZ subfamily.

The protein localises to the cytoplasm. The catalysed reaction is Hydrolysis of terminal non-reducing N-acetyl-D-hexosamine residues in N-acetyl-beta-D-hexosaminides.. It functions in the pathway cell wall biogenesis; peptidoglycan recycling. Plays a role in peptidoglycan recycling by cleaving the terminal beta-1,4-linked N-acetylglucosamine (GlcNAc) from peptide-linked peptidoglycan fragments, giving rise to free GlcNAc, anhydro-N-acetylmuramic acid and anhydro-N-acetylmuramic acid-linked peptides. The chain is Beta-hexosaminidase from Histophilus somni (strain 129Pt) (Haemophilus somnus).